A 245-amino-acid chain; its full sequence is 1-(5-phosphoribosyl)-5-[(5-phosphoribosylamino)methylideneamino] imidazole-4-carboxamide isomerase (245 aa).

Residue D8 is the Proton acceptor of the active site. The Proton donor role is filled by D129.

The protein belongs to the HisA/HisF family.

It localises to the cytoplasm. The catalysed reaction is 1-(5-phospho-beta-D-ribosyl)-5-[(5-phospho-beta-D-ribosylamino)methylideneamino]imidazole-4-carboxamide = 5-[(5-phospho-1-deoxy-D-ribulos-1-ylimino)methylamino]-1-(5-phospho-beta-D-ribosyl)imidazole-4-carboxamide. The protein operates within amino-acid biosynthesis; L-histidine biosynthesis; L-histidine from 5-phospho-alpha-D-ribose 1-diphosphate: step 4/9. This Sinorhizobium fredii (strain NBRC 101917 / NGR234) protein is 1-(5-phosphoribosyl)-5-[(5-phosphoribosylamino)methylideneamino] imidazole-4-carboxamide isomerase.